A 152-amino-acid chain; its full sequence is SUZ RNA-binding domain-containing (152 aa).

Met-1 carries the N-acetylmethionine modification. Disordered regions lie at residues 30-86 (TQKE…LPVK) and 99-152 (RKRI…KQRR). Phosphoserine occurs at positions 37, 39, and 51. Residues 42–107 (KVPIVIQDDS…ARKRILGSAS (66 aa)) form the SUZ domain. The segment covering 66-79 (PTSNGVVSGPNSAS) has biased composition (polar residues). A phosphoserine mark is found at Ser-105 and Ser-107. The SUZ-C domain occupies 111–152 (EQEKPILDRPTRISQPEDSRQPNNVIRQPLGPDGSQGFKQRR). A compositionally biased stretch (basic and acidic residues) spans 113-130 (EKPILDRPTRISQPEDSR).

Belongs to the SZRD1 family.

The protein is SUZ RNA-binding domain-containing (SZRD1) of Bos taurus (Bovine).